The primary structure comprises 590 residues: Transcription factor bHLH13 (590 aa).

Disordered regions lie at residues 274–296 (LQHH…HRQF) and 385–439 (AASS…EAER). Residues 281–293 (QQQQQQPPQQQQH) are compositionally biased toward low complexity. Residues 416–425 (RPRKRGRRPA) show a composition bias toward basic residues. One can recognise a bHLH domain in the interval 429–478 (AEALNHVEAERQRREKLNQRFYALRSVVPNISKMDKASLLGDAVSYINEL).

As to quaternary structure, homodimer.

The protein resides in the nucleus. This chain is Transcription factor bHLH13 (BHLH13), found in Arabidopsis thaliana (Mouse-ear cress).